The sequence spans 464 residues: Vitamin D3 hydroxylase-associated protein (464 aa).

Residues K150 and S225 each act as charge relay system in the active site. Residue S249 is the Acyl-ester intermediate of the active site.

Belongs to the amidase family. Kidney.

Its subcellular location is the mitochondrion inner membrane. Its function is as follows. May have a vitamin D3 hydroxylase regulatory function. The protein is Vitamin D3 hydroxylase-associated protein of Gallus gallus (Chicken).